Reading from the N-terminus, the 380-residue chain is Flap endonuclease 1 (380 aa).

Residues 1–105 (MGIKGLAQVL…GELAKRVARH (105 aa)) are N-domain. Position 34 (D34) interacts with Mg(2+). Residues R47 and R71 each contribute to the DNA site. Mg(2+) is bound by residues D87, E159, E161, D180, and D182. The tract at residues 123 to 254 (MVDRFAKRTV…ARAVELIRQY (132 aa)) is I-domain. A DNA-binding site is contributed by E159. DNA is bound by residues G232 and D234. D234 provides a ligand contact to Mg(2+). Residues 337–345 (PQGRLDSFF) are interaction with PCNA. The tract at residues 340 to 380 (RLDSFFKPVPSSPKKPVDTKSKGSAKRKRDSNKGGESKKKR) is disordered. The span at 342–353 (DSFFKPVPSSPK) shows a compositional bias: low complexity. Residues S350 and S351 each carry the phosphoserine modification. Residues 370-380 (SNKGGESKKKR) are compositionally biased toward basic and acidic residues.

This sequence belongs to the XPG/RAD2 endonuclease family. FEN1 subfamily. Interacts with PCNA. Three molecules of rad2 bind to one PCNA trimer with each molecule binding to one PCNA monomer. PCNA stimulates the nuclease activity without altering cleavage specificity. Mg(2+) serves as cofactor. Post-translationally, phosphorylated. Phosphorylation upon DNA damage induces relocalization to the nuclear plasma.

The protein localises to the nucleus. It localises to the nucleolus. Its subcellular location is the nucleoplasm. It is found in the mitochondrion. Its function is as follows. Structure-specific nuclease with 5'-flap endonuclease and 5'-3' exonuclease activities involved in DNA replication and repair. During DNA replication, cleaves the 5'-overhanging flap structure that is generated by displacement synthesis when DNA polymerase encounters the 5'-end of a downstream Okazaki fragment. It enters the flap from the 5'-end and then tracks to cleave the flap base, leaving a nick for ligation. Also involved in the long patch base excision repair (LP-BER) pathway, by cleaving within the apurinic/apyrimidinic (AP) site-terminated flap. Acts as a genome stabilization factor that prevents flaps from equilibrating into structures that lead to duplications and deletions. Also possesses 5'-3' exonuclease activity on nicked or gapped double-stranded DNA, and exhibits RNase H activity. Also involved in replication and repair of rDNA and in repairing mitochondrial DNA. The sequence is that of Flap endonuclease 1 from Schizosaccharomyces pombe (strain 972 / ATCC 24843) (Fission yeast).